Consider the following 146-residue polypeptide: Putative transposon Ty5-1 protein YCL075W (146 aa).

This Saccharomyces cerevisiae (strain ATCC 204508 / S288c) (Baker's yeast) protein is Putative transposon Ty5-1 protein YCL075W (TY5B).